The primary structure comprises 474 residues: Phosphatidylserine synthase 2 (474 aa).

The Lumenal segment spans residues 1–62 (MLRSDVRRVA…DDGTNTFFWR (62 aa)). A helical membrane pass occupies residues 63 to 83 (AHTLTVLFILTCSLGYVTLLE). Over 84–96 (ETPQDTAYNAKRG) the chain is Cytoplasmic. The helical transmembrane segment at 97-117 (IIASILVFLCFGVTQAKDGPF) threads the bilayer. The Lumenal portion of the chain corresponds to 118-126 (SRPHPAYWR). The helical transmembrane segment at 127–147 (FWLCVSVVYELFLIFILFQTV) threads the bilayer. The Cytoplasmic segment spans residues 148 to 313 (HDGRQFMKFI…EWKPASSLRR (166 aa)). Residues 314–334 (WLAVCGIIFVFLLAELNTFYL) traverse the membrane as a helical segment. Residue lysine 335 is a topological domain, lumenal. A helical transmembrane segment spans residues 336–356 (FVLWMPPEHYLVLLRLVFFVN). Over 357–376 (VGGVAMREIYDFMDDLKFHK) the chain is Cytoplasmic. The chain crosses the membrane as a helical span at residues 377 to 397 (KLGQQAWMVAAITVTEFLIVV). The Lumenal portion of the chain corresponds to 398-403 (KYDPYT). Residues 404–424 (ITLPLPFYVTQCWILGIVLVL) form a helical membrane-spanning segment. At 425–474 (TWTVWRFFIRDITLRYKEIRQQKQHRNEEEKSHRNGDVNSEKDTNKHKKH) the chain is on the cytoplasmic side. The segment covering 448 to 468 (QHRNEEEKSHRNGDVNSEKDT) has biased composition (basic and acidic residues). The segment at 448–474 (QHRNEEEKSHRNGDVNSEKDTNKHKKH) is disordered.

The protein belongs to the phosphatidyl serine synthase family.

Its subcellular location is the endoplasmic reticulum membrane. It carries out the reaction a 1,2-diacyl-sn-glycero-3-phosphoethanolamine + L-serine = a 1,2-diacyl-sn-glycero-3-phospho-L-serine + ethanolamine. The enzyme catalyses 1-hexadecanoyl-2-(9Z-octadecenoyl)-sn-glycero-3-phosphoethanolamine + L-serine = 1-hexadecanoyl-2-(9Z-octadecenoyl)-sn-glycero-3-phospho-L-serine + ethanolamine. The catalysed reaction is 1-hexadecanoyl-2-(4Z,7Z,10Z,13Z,16Z,19Z-docosahexaenoyl)-sn-glycero-3-phosphoethanolamine + L-serine = 1-hexadecanoyl-2-(4Z,7Z,10Z,13Z,16Z,19Z-docosahexaenoyl)-sn-glycero-3-phosphoserine + ethanolamine. It catalyses the reaction 1-octadecanoyl-2-(5Z,8Z,11Z,14Z)-eicosatetraenoyl-sn-glycero-3-phosphoethanolamine + L-serine = 1-octadecanoyl-2-(5Z,8Z,11Z,14Z)-eicosatetraenoyl-sn-glycero-3-phosphoserine + ethanolamine. It carries out the reaction 1-octadecanoyl-2-(4Z,7Z,10Z,13Z,16Z,19Z-docosahexaenoyl)-sn-glycero-3-phosphoethanolamine + L-serine = 1-octadecanoyl-2-(4Z,7Z,10Z,13Z,16Z,19Z-docosahexaenoyl)-sn-glycero-3-phosphoserine + ethanolamine. The enzyme catalyses 1-(1Z-octadecenyl)-2-(4Z,7Z,10Z,13Z,16Z,19Z-docosahexaenoyl)-sn-glycero-3-phosphoethanolamine + L-serine = 1-(1Z-octadecenyl)-2-(4Z,7Z,10Z,13Z,16Z,19Z-docosahexaenoyl)-sn-glycero-3-phospho-L-serine + ethanolamine. The catalysed reaction is 1-octadecanoyl-2-(9Z-octadecenoyl)-sn-glycero-3-phosphoethanolamine + L-serine = 1-octadecanoyl-2-(9Z-octadecenoyl)-sn-glycero-3-phospho-L-serine + ethanolamine. It catalyses the reaction 1-(1Z-octadecenyl)-2-(9Z-octadecenoyl)-sn-glycero-3-phosphoethanolamine + L-serine = 1-(1Z-octadecenyl)-2-(9Z-octadecenoyl)-sn-glycero-3-phospho-L-serine + ethanolamine. It carries out the reaction 1-(1Z-octadecenyl)-2-(5Z,8Z,11Z,14Z- eicosatetraenoyl)-sn-glycero-3-phosphoethanolamine + L-serine = 1-(1Z-octadecenyl)-2-(5Z,8Z,11Z,14Z-eicosatetraenoyl)-sn-glycero-3-phospho-L-serine + ethanolamine. It participates in phospholipid metabolism; phosphatidylserine biosynthesis. Catalyzes a base-exchange reaction in which the polar head group of phosphatidylethanolamine (PE) or phosphatidylcholine (PC) is replaced by L-serine. Catalyzes the conversion of phosphatatidylethanolamine and does not act on phosphatidylcholine. Can utilize both phosphatidylethanolamine (PE) plasmalogen and diacyl PE as substrate and the latter is six times better utilized, indicating the importance of an ester linkage at the sn-1 position. Although it shows no sn-1 fatty acyl preference, exhibits significant preference towards docosahexaenoic acid (22:6n-3) compared with 18:1 or 20:4 at the sn-2 position. This is Phosphatidylserine synthase 2 (ptdss2) from Xenopus tropicalis (Western clawed frog).